A 238-amino-acid polypeptide reads, in one-letter code: Probable transcriptional regulatory protein STER_0242 (238 aa).

This sequence belongs to the TACO1 family. YeeN subfamily.

It is found in the cytoplasm. The protein is Probable transcriptional regulatory protein STER_0242 of Streptococcus thermophilus (strain ATCC BAA-491 / LMD-9).